A 196-amino-acid chain; its full sequence is Spore maturation protein A (196 aa).

4 helical membrane passes run 1–21 (MVNI…MCNG), 37–57 (AITI…LMKI), 133–153 (ITFL…VIAV), and 163–183 (TDIV…AIII).

The protein localises to the cell membrane. In terms of biological role, involved in spore core dehydration; might be involved in the transport of something into or out of the forespore or could be required for some modification of the cortex peptidoglycan structure. This chain is Spore maturation protein A (spmA), found in Bacillus subtilis (strain 168).